We begin with the raw amino-acid sequence, 139 residues long: ATP synthase epsilon chain (139 aa).

Belongs to the ATPase epsilon chain family. As to quaternary structure, F-type ATPases have 2 components, CF(1) - the catalytic core - and CF(0) - the membrane proton channel. CF(1) has five subunits: alpha(3), beta(3), gamma(1), delta(1), epsilon(1). CF(0) has three main subunits: a, b and c.

It is found in the cell membrane. Its function is as follows. Produces ATP from ADP in the presence of a proton gradient across the membrane. The chain is ATP synthase epsilon chain from Roseiflexus sp. (strain RS-1).